The sequence spans 323 residues: Fructokinase-1 (323 aa).

The protein belongs to the carbohydrate kinase PfkB family. Expressed in stems, at higher levels in roots, and hardly detectable in leaves.

It carries out the reaction D-fructose + ATP = D-fructose 6-phosphate + ADP + H(+). It participates in glycan biosynthesis; starch biosynthesis. Inhibited at high fructose. May play an important role in maintaining the flux of carbon towards starch formation in endosperm. May also be involved in a sugar-sensing pathway. In Zea mays (Maize), this protein is Fructokinase-1 (FRK1).